A 296-amino-acid chain; its full sequence is 4-hydroxybenzoate octaprenyltransferase (296 aa).

8 helical membrane passes run 28–48 (PIGI…AGKG), 52–72 (LANI…GCVI), 102–122 (ALVF…CTNA), 146–166 (YYPQ…AFTA), 169–189 (GELP…TVGY), 219–239 (VIIL…GSKF), 241–261 (LGMW…WEFW), and 275–295 (FLHN…DYAL).

This sequence belongs to the UbiA prenyltransferase family. Mg(2+) serves as cofactor.

The protein localises to the cell inner membrane. It catalyses the reaction all-trans-octaprenyl diphosphate + 4-hydroxybenzoate = 4-hydroxy-3-(all-trans-octaprenyl)benzoate + diphosphate. Its pathway is cofactor biosynthesis; ubiquinone biosynthesis. Functionally, catalyzes the prenylation of para-hydroxybenzoate (PHB) with an all-trans polyprenyl group. Mediates the second step in the final reaction sequence of ubiquinone-8 (UQ-8) biosynthesis, which is the condensation of the polyisoprenoid side chain with PHB, generating the first membrane-bound Q intermediate 3-octaprenyl-4-hydroxybenzoate. The protein is 4-hydroxybenzoate octaprenyltransferase of Pseudomonas fluorescens (strain Pf0-1).